Here is a 161-residue protein sequence, read N- to C-terminus: ATP synthase subunit b 1 (161 aa).

The helical transmembrane segment at 5–25 (EFWVAVAFVIFCGIVWKAGGF) threads the bilayer.

The protein belongs to the ATPase B chain family. As to quaternary structure, F-type ATPases have 2 components, F(1) - the catalytic core - and F(0) - the membrane proton channel. F(1) has five subunits: alpha(3), beta(3), gamma(1), delta(1), epsilon(1). F(0) has three main subunits: a(1), b(2) and c(10-14). The alpha and beta chains form an alternating ring which encloses part of the gamma chain. F(1) is attached to F(0) by a central stalk formed by the gamma and epsilon chains, while a peripheral stalk is formed by the delta and b chains.

It is found in the cell inner membrane. F(1)F(0) ATP synthase produces ATP from ADP in the presence of a proton or sodium gradient. F-type ATPases consist of two structural domains, F(1) containing the extramembraneous catalytic core and F(0) containing the membrane proton channel, linked together by a central stalk and a peripheral stalk. During catalysis, ATP synthesis in the catalytic domain of F(1) is coupled via a rotary mechanism of the central stalk subunits to proton translocation. In terms of biological role, component of the F(0) channel, it forms part of the peripheral stalk, linking F(1) to F(0). This Methylobacterium sp. (strain 4-46) protein is ATP synthase subunit b 1.